We begin with the raw amino-acid sequence, 209 residues long: Ribosomal RNA large subunit methyltransferase E (209 aa).

S-adenosyl-L-methionine-binding residues include Gly63, Trp65, Asp83, Asp99, and Asp124. The active-site Proton acceptor is Lys164. Residues 191-209 (EASRGRSREVYIVATGYKG) form the TRAM domain.

It belongs to the class I-like SAM-binding methyltransferase superfamily. RNA methyltransferase RlmE family.

The protein resides in the cytoplasm. It carries out the reaction uridine(2552) in 23S rRNA + S-adenosyl-L-methionine = 2'-O-methyluridine(2552) in 23S rRNA + S-adenosyl-L-homocysteine + H(+). In terms of biological role, specifically methylates the uridine in position 2552 of 23S rRNA at the 2'-O position of the ribose in the fully assembled 50S ribosomal subunit. This Haemophilus influenzae (strain ATCC 51907 / DSM 11121 / KW20 / Rd) protein is Ribosomal RNA large subunit methyltransferase E.